Consider the following 244-residue polypeptide: Carboxy-S-adenosyl-L-methionine synthase (244 aa).

Residues Tyr-40, 65–67, 90–91, Asn-134, and Arg-201 each bind S-adenosyl-L-methionine; these read GCS and DN.

It belongs to the class I-like SAM-binding methyltransferase superfamily. Cx-SAM synthase family. In terms of assembly, homodimer.

The enzyme catalyses prephenate + S-adenosyl-L-methionine = carboxy-S-adenosyl-L-methionine + 3-phenylpyruvate + H2O. Its function is as follows. Catalyzes the conversion of S-adenosyl-L-methionine (SAM) to carboxy-S-adenosyl-L-methionine (Cx-SAM). The polypeptide is Carboxy-S-adenosyl-L-methionine synthase (Citrifermentans bemidjiense (strain ATCC BAA-1014 / DSM 16622 / JCM 12645 / Bem) (Geobacter bemidjiensis)).